The primary structure comprises 326 residues: Microtubule-associated protein RP/EB family member 2 (326 aa).

Ser-9 is subject to Phosphoserine. The region spanning 56–158 is the Calponin-homology (CH) domain; sequence TMSRHDIIAW…FIQWFKKFYD (103 aa). Tyr-166 carries the post-translational modification Phosphotyrosine. Disordered regions lie at residues 170-239 and 297-326; these read EARQ…DKDL and YASD…QEEY. The DCTN1-binding stretch occupies residues 186 to 326; sequence QIFNLPKKSH…DQQPQQQEEY (141 aa). Residues 199-233 show a composition bias toward low complexity; that stretch reads SPTAGAAKSSPAAKPGSTPSRPSSAKRASSSGSAS. A phosphoserine mark is found at Ser-218 and Ser-235. Residues 235–305 form the EB1 C-terminal domain; that stretch reads SDKDLETQVI…LYASDEQEGQ (71 aa). The tract at residues 258-301 is APC-binding; the sequence is EGVEKERDFYFGKLREIELLCQEHGQENDDLVQRLMEVLYASDE. Over residues 300–312 the composition is skewed to acidic residues; that stretch reads DEQEGQTEEPEVE. Residues 317–326 are compositionally biased toward low complexity; that stretch reads DQQPQQQEEY.

This sequence belongs to the MAPRE family. In terms of assembly, interacts with DCTN1. Interacts with APC (via C-terminal). Interacts with monomeric and polymerized tubulin. Interacts with SLAIN1. Interacts (via the N-terminal region) with BAG1. Interacts with ASB14. Interacts with HAX1; this interaction is essential for epidermal cell migration. Post-translationally, phosphorylated at Ser-235 by CK2 leading to enhanced cell adhesion. Phosphorylated by CDK1 and AURKB during mitosis reduces the binding affinity of MAPRE2 for microtubules. In terms of processing, ubiquitinated in an ASB14-dependent manner; leading to proteasomal degradation.

Its subcellular location is the cytoplasm. The protein resides in the cytoskeleton. Adapter protein that is involved in microtubule polymerization, and spindle function by stabilizing microtubules and anchoring them at centrosomes. Therefore, ensures mitotic progression and genome stability. Acts as a central regulator of microtubule reorganization in apico-basal epithelial differentiation. Plays a role during oocyte meiosis by regulating microtubule dynamics. Participates in neurite growth by interacting with plexin B3/PLXNB3 and microtubule reorganization during apico-basal epithelial differentiation. Also plays an essential role for cell migration and focal adhesion dynamics. Mechanistically, recruits HAX1 to microtubules in order to regulate focal adhesion dynamics. The polypeptide is Microtubule-associated protein RP/EB family member 2 (Mapre2) (Rattus norvegicus (Rat)).